A 247-amino-acid polypeptide reads, in one-letter code: ATP synthase subunit a, chloroplastic (247 aa).

A run of 5 helical transmembrane segments spans residues 38–58, 95–115, 134–154, 199–219, and 220–240; these read QVLI…ALAV, VPFI…GALL, INTT…AGLT, LVVV…VMFL, and GLFT…AYIG.

This sequence belongs to the ATPase A chain family. F-type ATPases have 2 components, CF(1) - the catalytic core - and CF(0) - the membrane proton channel. CF(1) has five subunits: alpha(3), beta(3), gamma(1), delta(1), epsilon(1). CF(0) has four main subunits: a, b, b' and c.

It localises to the plastid. The protein localises to the chloroplast thylakoid membrane. Its function is as follows. Key component of the proton channel; it plays a direct role in the translocation of protons across the membrane. The protein is ATP synthase subunit a, chloroplastic of Helianthus annuus (Common sunflower).